A 1272-amino-acid polypeptide reads, in one-letter code: Regulator of nonsense transcripts 2 (1272 aa).

Over residues 1–114 (MPAERKKPAS…QEEQAKRQQE (114 aa)) the composition is skewed to basic and acidic residues. Disordered stretches follow at residues 1 to 126 (MPAE…EKEE), 370 to 389 (DHRE…HSKG), 423 to 445 (NMPD…DIFT), and 490 to 517 (CQNK…SPDD). Residues 54–134 (EDKKKRLEDD…EESIQLHQEA (81 aa)) adopt a coiled-coil conformation. The sufficient for interaction with UPF1 stretch occupies residues 94–133 (KKKHQEEERKKQEEQAKRQQEEEAAAQMKEKEESIQLHQE). Residues 168 to 431 (LKKNTAFVKK…ENMPDLPQDK (264 aa)) enclose the MIF4G 1 domain. Composition is skewed to basic and acidic residues over residues 428–439 (PQDKPTPEEHGP) and 490–513 (CQNK…KEVS). Positions 487 to 559 (EKSCQNKESN…EQEQEDEEAS (73 aa)) form a coiled coil. MIF4G domains are found at residues 569–758 (DAFL…CNPP) and 773–986 (EYVR…LRPK). The tract at residues 711–928 (GRFLFRSPES…IRLVCTILDT (218 aa)) is sufficient for interaction with UPF3A and UPF3B. The interval 757-1272 (PPPAEKTVKK…LIFKTGGRRR (516 aa)) is sufficient for interaction with EIF4A1 and EIF1. Positions 839–859 (EDVGIHVVDGVLEDIRLGMEV) are binds to UPF3B. Positions 1018–1098 (DSKDSMTEGE…DEENTEVMIK (81 aa)) are disordered. Acidic residues predominate over residues 1027-1076 (ENLEEDEEEEEGGAETEEQSGNESEVNEPEEEEGSDNDDDEGEEEEEENT). The segment at 1084-1272 (KENETDEENT…LIFKTGGRRR (189 aa)) is sufficient for interaction with UPF1 C-terminus. Threonine 1088 is subject to Phosphothreonine. Interaction with UPF1 stretches follow at residues 1105 to 1129 (VPCV…QQRS) and 1167 to 1207 (DTMP…AEQE). The segment at 1105–1198 (VPCVEDEDFI…PMSSQLAANH (94 aa)) is necessary for interaction with UPF1. Residues 1220-1272 (NERQEQEDYQEMLQSLAQRPAPANTNRERRPRYQHPKGAPNADLIFKTGGRRR) form a disordered region.

In terms of assembly, found in a post-splicing messenger ribonucleoprotein (mRNP) complex. Associates with the exon junction complex (EJC). Interacts with SMG1, EST1A, UPF1, UPF3A, UPF3B, EIF4A1 and EIF1. Ubiquitous.

It localises to the cytoplasm. The protein localises to the perinuclear region. In terms of biological role, involved in nonsense-mediated decay (NMD) of mRNAs containing premature stop codons by associating with the nuclear exon junction complex (EJC). Recruited by UPF3B associated with the EJC core at the cytoplasmic side of the nuclear envelope and the subsequent formation of an UPF1-UPF2-UPF3 surveillance complex (including UPF1 bound to release factors at the stalled ribosome) is believed to activate NMD. In cooperation with UPF3B stimulates both ATPase and RNA helicase activities of UPF1. Binds spliced mRNA. The polypeptide is Regulator of nonsense transcripts 2 (Homo sapiens (Human)).